Here is a 296-residue protein sequence, read N- to C-terminus: Diaminopimelate epimerase (296 aa).

Positions 17, 49, and 69 each coordinate substrate. The active-site Proton donor is the Cys-78. Residues 79–80, Asn-171, Asn-205, and 223–224 contribute to the substrate site; these read GN and ER. Cys-232 acts as the Proton acceptor in catalysis. Residue 233-234 participates in substrate binding; the sequence is GT.

The protein belongs to the diaminopimelate epimerase family. Homodimer.

Its subcellular location is the cytoplasm. It carries out the reaction (2S,6S)-2,6-diaminopimelate = meso-2,6-diaminopimelate. The protein operates within amino-acid biosynthesis; L-lysine biosynthesis via DAP pathway; DL-2,6-diaminopimelate from LL-2,6-diaminopimelate: step 1/1. In terms of biological role, catalyzes the stereoinversion of LL-2,6-diaminopimelate (L,L-DAP) to meso-diaminopimelate (meso-DAP), a precursor of L-lysine and an essential component of the bacterial peptidoglycan. The sequence is that of Diaminopimelate epimerase from Methylorubrum extorquens (strain CM4 / NCIMB 13688) (Methylobacterium extorquens).